A 390-amino-acid polypeptide reads, in one-letter code: Homeobox protein Meis1 (390 aa).

Positions 108–192 (GGDVCSSESF…IDLVIDDREG (85 aa)) constitute an MEIS N-terminal domain. Residues 190 to 202 (REGGSKSDSEDIT) show a composition bias toward basic and acidic residues. A disordered region spans residues 190–279 (REGGSKSDSE…KKRHKKRGIF (90 aa)). The segment covering 203 to 213 (RSANLTDQPSW) has biased composition (polar residues). The homeobox; TALE-type DNA-binding region spans 272-334 (RHKKRGIFPK…NARRRIVQPM (63 aa)). Positions 299–329 (YPSEEQKKQLAQDTGLTILQVNNWFINARRR) are interaction with DNA. The required for transcriptional activation stretch occupies residues 335–390 (IDQSNRAVSQGTPYNPDGQPMGGFVMDGQQHMGIRAPGPMSGMGMNMGMEGQWHYM).

The protein belongs to the TALE/MEIS homeobox family. Interacts with the N-terminal region of PBX1 to form a heterodimer which binds DNA including a cAMP-responsive sequence in CYP17. Also forms heterodimers with PBX2. Forms heterotrimers with PBX1 or PBX2 and a number of HOX proteins including HOXA9, HOXD4 and HOXD9 where it acts as a non-DNA-binding partner. Also forms heterotrimers with PBX1 and HOX proteins including HOXD9 and HOXD10 where PBX1 is the non-DNA-binding partner. Heterodimer with DLX3. Heterodimer with HOXB13. As to expression, expressed at low level in normal immunohepatopoietic tissues, including the fetal liver. Expressed in a subset of myeloid leukemia cell lines, with the highest expression seen in those with a megakaryocytic-erythroid phenotype. Also expressed at high levels in the cerebellum.

The protein localises to the nucleus. Its function is as follows. Acts as a transcriptional regulator of PAX6. Acts as a transcriptional activator of PF4 in complex with PBX1 or PBX2. Required for hematopoiesis, megakaryocyte lineage development and vascular patterning. May function as a cofactor for HOXA7 and HOXA9 in the induction of myeloid leukemias. This is Homeobox protein Meis1 (MEIS1) from Homo sapiens (Human).